The following is a 141-amino-acid chain: Nucleoside diphosphate kinase (141 aa).

K11, F59, R87, T93, R104, and N114 together coordinate ATP. H117 functions as the Pros-phosphohistidine intermediate in the catalytic mechanism.

This sequence belongs to the NDK family. In terms of assembly, homotetramer. Requires Mg(2+) as cofactor.

Its subcellular location is the cytoplasm. The catalysed reaction is a 2'-deoxyribonucleoside 5'-diphosphate + ATP = a 2'-deoxyribonucleoside 5'-triphosphate + ADP. It carries out the reaction a ribonucleoside 5'-diphosphate + ATP = a ribonucleoside 5'-triphosphate + ADP. Its function is as follows. Major role in the synthesis of nucleoside triphosphates other than ATP. The ATP gamma phosphate is transferred to the NDP beta phosphate via a ping-pong mechanism, using a phosphorylated active-site intermediate. This chain is Nucleoside diphosphate kinase, found in Paraburkholderia phytofirmans (strain DSM 17436 / LMG 22146 / PsJN) (Burkholderia phytofirmans).